We begin with the raw amino-acid sequence, 185 residues long: MADGPGSPGGGGGSHESGSPRGGGGGGGGGGGGGGVREQDRFLPIANISRIMKKAIPANGKIAKDAKETVQECVSEFISFITSEASDKCQREKRKTINGDDLLWAMATLGFEDYIEPLKVYLQKYREMEGDSKLTAKAGDGSVKKDVLGSHGGSSSSAQGMGQQAAYNQGMGYMQPQYHNGDVSN.

Residues 1–36 (MADGPGSPGGGGGSHESGSPRGGGGGGGGGGGGGGV) show a composition bias toward gly residues. Positions 1 to 39 (MADGPGSPGGGGGSHESGSPRGGGGGGGGGGGGGGVREQ) are disordered. The DNA-binding element occupies 43–49 (LPIANIS). The segment at 70–81 (VQECVSEFISFI) is subunit association domain (SAD). Positions 145–164 (KDVLGSHGGSSSSAQGMGQQ) are disordered. Positions 153–164 (GSSSSAQGMGQQ) are enriched in low complexity.

It belongs to the NFYB/HAP3 subunit family. In terms of assembly, heterotrimeric transcription factor composed of three components, NF-YA, NF-YB and NF-YC. NF-YB and NF-YC must interact and dimerize for NF-YA association and DNA binding. In terms of tissue distribution, ubiquitous.

It localises to the nucleus. Component of the NF-Y/HAP transcription factor complex. The NF-Y complex stimulates the transcription of various genes by recognizing and binding to a CCAAT motif in promoters. May regulate the expression of photosynthetic genes, and may be involved in chloroplast and amyloplast development. The chain is Nuclear transcription factor Y subunit B-3 (NFYB3) from Oryza sativa subsp. japonica (Rice).